Here is a 914-residue protein sequence, read N- to C-terminus: TRPM8 channel-associated factor 3 (914 aa).

In terms of domain architecture, Peptidase M60 spans 533-832; it reads NSWVSTGLYL…TYLQLQEGFG (300 aa).

It belongs to the TCAF family. As to expression, prostate-specific. Present in both dorso-lateral and anterior prostate.

Functionally, may play a role in the regulation of the cation channel TRPM8 activity. The chain is TRPM8 channel-associated factor 3 from Mus musculus (Mouse).